We begin with the raw amino-acid sequence, 457 residues long: tRNA-2-methylthio-N(6)-dimethylallyladenosine synthase (457 aa).

Residues Arg-4 to Ala-119 enclose the MTTase N-terminal domain. [4Fe-4S] cluster contacts are provided by Cys-13, Cys-48, Cys-82, Cys-164, Cys-168, and Cys-171. In terms of domain architecture, Radical SAM core spans Asn-150–Ser-385. The 69-residue stretch at Lys-388–Ile-456 folds into the TRAM domain.

It belongs to the methylthiotransferase family. MiaB subfamily. Monomer. [4Fe-4S] cluster serves as cofactor.

Its subcellular location is the cytoplasm. The catalysed reaction is N(6)-dimethylallyladenosine(37) in tRNA + (sulfur carrier)-SH + AH2 + 2 S-adenosyl-L-methionine = 2-methylsulfanyl-N(6)-dimethylallyladenosine(37) in tRNA + (sulfur carrier)-H + 5'-deoxyadenosine + L-methionine + A + S-adenosyl-L-homocysteine + 2 H(+). Functionally, catalyzes the methylthiolation of N6-(dimethylallyl)adenosine (i(6)A), leading to the formation of 2-methylthio-N6-(dimethylallyl)adenosine (ms(2)i(6)A) at position 37 in tRNAs that read codons beginning with uridine. The polypeptide is tRNA-2-methylthio-N(6)-dimethylallyladenosine synthase (Lawsonia intracellularis (strain PHE/MN1-00)).